Here is a 158-residue protein sequence, read N- to C-terminus: Snaclec convulxin subunit alpha (158 aa).

The N-terminal stretch at 1–23 (MGRFIFVSFGLLVLFLSLSGTGA) is a signal peptide. Disulfide bonds link Cys-27–Cys-38, Cys-55–Cys-152, and Cys-127–Cys-144. A C-type lectin domain is found at 34–158 (YDQHCYRIFN…PFVCKFPPQC (125 aa)).

The protein belongs to the snaclec family. In terms of assembly, tetramer of heterodimers of alpha and beta subunits (alphabeta)(4); disulfide-linked. In terms of tissue distribution, expressed by the venom gland.

It localises to the secreted. Functionally, snake venom lectin that activates platelets by binding to the platelet collagen receptor glycoprotein VI (GP6). The indirect activation of integrin alpha-IIb/beta-3 (ITGA2B/ITGB3) also induced by the toxin is upstream the cytoskeletal translocation of GPIb, FcRgamma (FCER1G) and 14-3-3zeta (YWHAZ). The protein is Snaclec convulxin subunit alpha of Crotalus durissus terrificus (South American rattlesnake).